A 446-amino-acid chain; its full sequence is Tubulin beta-2 chain (446 aa).

GTP contacts are provided by Gln11, Glu69, Ser138, Gly142, Thr143, Gly144, Asn204, and Asn226. A Mg(2+)-binding site is contributed by Glu69. Residues 424 to 446 (QYQEATADEEGEFDEDEEGGGDE) are disordered. Residues 429–446 (TADEEGEFDEDEEGGGDE) show a composition bias toward acidic residues.

It belongs to the tubulin family. In terms of assembly, dimer of alpha and beta chains. A typical microtubule is a hollow water-filled tube with an outer diameter of 25 nm and an inner diameter of 15 nM. Alpha-beta heterodimers associate head-to-tail to form protofilaments running lengthwise along the microtubule wall with the beta-tubulin subunit facing the microtubule plus end conferring a structural polarity. Microtubules usually have 13 protofilaments but different protofilament numbers can be found in some organisms and specialized cells. The cofactor is Mg(2+).

It is found in the cytoplasm. The protein localises to the cytoskeleton. Tubulin is the major constituent of microtubules, a cylinder consisting of laterally associated linear protofilaments composed of alpha- and beta-tubulin heterodimers. Microtubules grow by the addition of GTP-tubulin dimers to the microtubule end, where a stabilizing cap forms. Below the cap, tubulin dimers are in GDP-bound state, owing to GTPase activity of alpha-tubulin. The sequence is that of Tubulin beta-2 chain (betaTub85D) from Drosophila erecta (Fruit fly).